Here is a 479-residue protein sequence, read N- to C-terminus: MDGTLLVGRSSFPYFALVAFEVGGIFRLLFLVLASPLAGLLYYFISESAGIRVLIFATFAGMKVSDIESVARAVLPKFYSSDLHPETWHVFSSCGKRCVLTANPRIMVEGFLKEYLGADMVIGTEISMYKGRATGFVNKPGILVGDNKAMALKKAFCSTSTPDIGLGDRKTDFPFMNLCKESYIVRPDPGVKPMSQDKLPKPIVFHDGRLVQKPSPLMALMIILWIPVGFLLACLRIAAGALLPMPLVYYAFWALGVRVKVKGNPPPPAKKSTDQTGVLFICSHRTLLDPIFLSTSLGRPIPAVTYSVSRLSEIISPIKTVRLSRDRVTDANMIKKMLEEGDLVICPEGTTCREPFLLRFSALFAELTDELVPVAMSNKMSMFHGTTARGWKGMDPFYFFMNPSPTYEVTFLNKLPYDLTCKAGKSSHDVANYIQRTIAATLSYECTNFTRKDKYKALAGNDGTVTTKPGLAAKKVMGC.

4 consecutive transmembrane segments (helical) span residues 14 to 34 (YFAL…LVLA), 37 to 57 (LAGL…LIFA), 215 to 235 (SPLM…LACL), and 237 to 257 (IAAG…ALGV). Residues 284–289 (HRTLLD) carry the HXXXXD motif motif. Asn448 carries N-linked (GlcNAc...) asparagine glycosylation.

This sequence belongs to the GPAT/DAPAT family.

The protein localises to the membrane. The catalysed reaction is sn-glycerol 3-phosphate + an acyl-CoA = a 1-acyl-sn-glycero-3-phosphate + CoA. Its pathway is lipid metabolism; glycerolipid metabolism. Functionally, involved in the production of cutin monomers. Esterifies acyl-group from acyl-ACP to the sn-2 position of glycerol-3-phosphate, a step in cutin biosynthesis. Required for colonization of the root by mycorrhizal fungi, and appropriate hyphopodia and arbuscule formation. Cutin monomers act as plant signals that promote colonization by arbuscular mycorrhizal fungi. This signaling function has been recruited by pathogenic oomycetes to facilitate appressoria formation and their own invasion. This Petunia hybrida (Petunia) protein is Glycerol-3-phosphate acyltransferase RAM2.